A 320-amino-acid chain; its full sequence is NAD kinase (320 aa).

Aspartate 96 serves as the catalytic Proton acceptor. NAD(+) contacts are provided by residues 96–97, arginine 101, 170–171, aspartate 200, and 211–216; these read DG, NE, and TAYAFS.

This sequence belongs to the NAD kinase family. Requires a divalent metal cation as cofactor.

The protein resides in the cytoplasm. The catalysed reaction is NAD(+) + ATP = ADP + NADP(+) + H(+). In terms of biological role, involved in the regulation of the intracellular balance of NAD and NADP, and is a key enzyme in the biosynthesis of NADP. Catalyzes specifically the phosphorylation on 2'-hydroxyl of the adenosine moiety of NAD to yield NADP. In Rhodococcus jostii (strain RHA1), this protein is NAD kinase.